Here is a 506-residue protein sequence, read N- to C-terminus: Protein P7 (506 aa).

2 RNA-binding regions span residues 128-249 and 325-355; these read ISYL…GKRE and DGSY…FKIS.

It belongs to the phytoreovirus protein P7 family.

It localises to the virion. Its subcellular location is the host cytoplasm. In terms of biological role, probable component of the transcriptional machinery present in the inner capsid. Displays dsRNA binding activity and may play an important role in the sorting of viral RNA and virion assembly. Together with the RNA-directed RNA polymerase P1 and capping enzyme P5, forms an transcriptional complex positioned near the channels situated at each of the five-fold vertices of the core. This is Protein P7 from Alopecurus aequalis (Barnyard grass).